Here is a 300-residue protein sequence, read N- to C-terminus: NAD kinase (300 aa).

Aspartate 80 acts as the Proton acceptor in catalysis. Residues 80–81 (DG), 154–155 (ND), arginine 165, arginine 182, aspartate 184, 195–200 (TAYALS), and glutamine 253 contribute to the NAD(+) site.

It belongs to the NAD kinase family. The cofactor is a divalent metal cation.

Its subcellular location is the cytoplasm. It carries out the reaction NAD(+) + ATP = ADP + NADP(+) + H(+). Involved in the regulation of the intracellular balance of NAD and NADP, and is a key enzyme in the biosynthesis of NADP. Catalyzes specifically the phosphorylation on 2'-hydroxyl of the adenosine moiety of NAD to yield NADP. The polypeptide is NAD kinase (Aromatoleum aromaticum (strain DSM 19018 / LMG 30748 / EbN1) (Azoarcus sp. (strain EbN1))).